Reading from the N-terminus, the 428-residue chain is MALETSAPEIADVEAYMRALGERARDASRMLARATTAQKNRALHAMAEALDAARETLETANRRDLEAGRANGLDEALLDRLALTPARIDSMIEGLRQVAALPDPVGEIRDMRYLPSGIQVGKMRVALGVVGIVYESRPNVTVDAASLCLKSGNATILRGGSEAIQSNRAIADCIRQGLAAADLDAACVQVVATTDRAAVGALIAMPEYVDVIVPRGGKGLIERISRDARVPVIKHLDGVCHVYVDRAADDAKAVAIADNAKTQRYSPCNTMETLLVHVDAAPRVLPELARLYASKGVELRACERARAWLADAVAATEDDWHAEYLAPILAVRVVDSLEEAIAHINTYGSHHTDAIVTESVTDARRFLAEVDSSSVMVNASTRFADGFEYGLGAEIGISTDKLHARGPVGLEGLTSEKYIVYGDGHVRS.

This sequence belongs to the gamma-glutamyl phosphate reductase family.

It is found in the cytoplasm. It catalyses the reaction L-glutamate 5-semialdehyde + phosphate + NADP(+) = L-glutamyl 5-phosphate + NADPH + H(+). The protein operates within amino-acid biosynthesis; L-proline biosynthesis; L-glutamate 5-semialdehyde from L-glutamate: step 2/2. Its function is as follows. Catalyzes the NADPH-dependent reduction of L-glutamate 5-phosphate into L-glutamate 5-semialdehyde and phosphate. The product spontaneously undergoes cyclization to form 1-pyrroline-5-carboxylate. This chain is Gamma-glutamyl phosphate reductase, found in Chromohalobacter salexigens (strain ATCC BAA-138 / DSM 3043 / CIP 106854 / NCIMB 13768 / 1H11).